Consider the following 200-residue polypeptide: Large ribosomal subunit protein bL25 (200 aa).

Disordered regions lie at residues 1–20 (MTIE…ASRR) and 179–200 (PVVA…GEAA).

Belongs to the bacterial ribosomal protein bL25 family. CTC subfamily. Part of the 50S ribosomal subunit; part of the 5S rRNA/L5/L18/L25 subcomplex. Contacts the 5S rRNA. Binds to the 5S rRNA independently of L5 and L18.

This is one of the proteins that binds to the 5S RNA in the ribosome where it forms part of the central protuberance. The chain is Large ribosomal subunit protein bL25 from Azoarcus sp. (strain BH72).